The sequence spans 90 residues: Small ribosomal subunit protein uS19 (90 aa).

Belongs to the universal ribosomal protein uS19 family.

Functionally, protein S19 forms a complex with S13 that binds strongly to the 16S ribosomal RNA. The polypeptide is Small ribosomal subunit protein uS19 (Methylococcus capsulatus (strain ATCC 33009 / NCIMB 11132 / Bath)).